The chain runs to 31 residues: Nemertide alpha-7 (31 aa).

Disulfide bonds link Cys-2–Cys-16, Cys-9–Cys-20, and Cys-15–Cys-26. Pro-29 is subject to 4-hydroxyproline.

This sequence belongs to the nemertide family. Confined to the epidermis and to the mucus layer.

Its subcellular location is the secreted. Its function is as follows. Potent toxin, demonstrating strong inhibitory effects on insect sodium channels (Nav) and reduced activity on mammalian sodium channels. Potently inhibits inactivation of insect sodium channels of B.germanica (BgNav1) (EC(50)=9.5 nM). The toxin also delays the inactivation of most mammalian Nav (human Nav1.1/SCN1A; EC(50)=171.5 nM, rat Nav1.2/SCN2A; EC(50)=50.4 nM, rat Nav1.3/SCN3A; EC(50)=170.2 nM, rat Nav1.4/SCN4A; EC(50)=810.6 nM, human Nav1.5/SCN5A; EC(50)=155.6 nM, mouse Nav1.6/SCN8A; EC(50)=147.6 nM, human Nav1.9/SCN9A; EC(50)=129 nM). Inactivation is completely prevented by a concentration of 1 uM, resulting in sustained, non-inactivating currents. In addition, the toxin significantly enhances the recovery from inactivation, and the open state is not required for the toxin to interact with the channel. In vivo, injection into brine shrimp (Artemia salina) stops movement or causes death after 24 hours (EC(50)=6.1 uM). The chain is Nemertide alpha-7 from Lineus ruber (Red bootlace).